The chain runs to 377 residues: GTPase Obg (377 aa).

The 159-residue stretch at 1-159 (MKFVDEATIE…RRLRMELKVL (159 aa)) folds into the Obg domain. A disordered region spans residues 127–148 (NIHFKSSTNRAPRQWTPGKEGE). The 177-residue stretch at 160 to 336 (ADVGLLGLPN…LIWALQDYLD (177 aa)) folds into the OBG-type G domain. Residues 166-173 (GLPNAGKS), 191-195 (FTTLH), 213-216 (DIPG), 288-291 (NKLD), and 317-319 (SGL) each bind GTP. Mg(2+)-binding residues include Ser173 and Thr193. The interval 339-377 (KRKDQDAQDQADGTYVFEDPRFDASRGGAAPATPPGGDE) is disordered.

Belongs to the TRAFAC class OBG-HflX-like GTPase superfamily. OBG GTPase family. Monomer. It depends on Mg(2+) as a cofactor.

It is found in the cytoplasm. In terms of biological role, an essential GTPase which binds GTP, GDP and possibly (p)ppGpp with moderate affinity, with high nucleotide exchange rates and a fairly low GTP hydrolysis rate. Plays a role in control of the cell cycle, stress response, ribosome biogenesis and in those bacteria that undergo differentiation, in morphogenesis control. In Bordetella bronchiseptica (strain ATCC BAA-588 / NCTC 13252 / RB50) (Alcaligenes bronchisepticus), this protein is GTPase Obg.